Consider the following 507-residue polypeptide: Serine hydroxymethyltransferase (507 aa).

Lysine 283 bears the N6-(pyridoxal phosphate)lysine mark.

This sequence belongs to the SHMT family. In terms of assembly, homotetramer. Pyridoxal 5'-phosphate is required as a cofactor.

It carries out the reaction (6R)-5,10-methylene-5,6,7,8-tetrahydrofolate + glycine + H2O = (6S)-5,6,7,8-tetrahydrofolate + L-serine. The protein operates within one-carbon metabolism; tetrahydrofolate interconversion. Functionally, interconversion of serine and glycine. This is Serine hydroxymethyltransferase (mel-32) from Caenorhabditis elegans.